The following is a 1019-amino-acid chain: Collagen alpha-1(VI) chain (1019 aa).

An N-terminal signal peptide occupies residues Met-1 to Ala-19. The VWFA 1 domain occupies Asp-37–Ile-233. N-linked (GlcNAc...) asparagine glycosylation is present at Asn-212. Residues Phe-248–Gly-588 are disordered. Positions Pro-253–Asp-262 are enriched in pro residues. Composition is skewed to basic and acidic residues over residues Lys-299–Lys-332 and Gly-370–Pro-380. Positions Glu-427–Asp-436 are enriched in low complexity. A Cell attachment site motif is present at residues Arg-476 to Asp-478. Asn-514 is a glycosylation site (N-linked (GlcNAc...) asparagine). Positions Arg-529–Asp-531 match the Cell attachment site motif. N-linked (GlcNAc...) asparagine glycosylation is present at Asn-535. The segment covering Arg-577–Gly-588 has biased composition (pro residues). 2 VWFA domains span residues Asp-613 to Ile-800 and Asp-824 to Val-1012. Asn-799 and Asn-887 each carry an N-linked (GlcNAc...) asparagine glycan.

This sequence belongs to the type VI collagen family. As to quaternary structure, trimers composed of three different chains: alpha 1(VI), alpha 2(VI), and alpha 3(VI). Prolines at the third position of the tripeptide repeating unit (G-X-Y) are hydroxylated in some or all of the chains.

It localises to the secreted. Its subcellular location is the extracellular space. The protein resides in the extracellular matrix. Collagen VI acts as a cell-binding protein. This Gallus gallus (Chicken) protein is Collagen alpha-1(VI) chain (COL6A1).